The following is a 385-amino-acid chain: MYVRHLGLRDFRSWAHADLELGPGRTVFVGPNGFGKTNIIEALWYSATLGSHRVGTDAPLIRAGADRAVISTIVVNDGRECAVDLEIAAGRANKARLNRSPVRSTREVIGVLRAVLFAPEDLALVRGDPADRRRYLDDLATLRRPTIAGVRADYDKVLRQRTALLKSVSGARFRGDRGALDTLDVWDSRLAQHGAELMAARIDLVRLLAPEVEKAYQLLAPESRSAAIAYRASMDAFVAADDAAPDRVTLEEGLLAALAARRDAELERGVCLVGPHRDDLELRLGDQPAKGFASHGESWSMAVALRLAAFALLRADGSEPVLLLDDVFAELDAARRTALARVAESAEQVLVTAAVLEDIPSGWDARKVHIDLRDSADGRVSVVQS.

30–37 (GPNGFGKT) is a binding site for ATP.

This sequence belongs to the RecF family.

Its subcellular location is the cytoplasm. In terms of biological role, the RecF protein is involved in DNA metabolism; it is required for DNA replication and normal SOS inducibility. RecF binds preferentially to single-stranded, linear DNA. It also seems to bind ATP. The sequence is that of DNA replication and repair protein RecF from Mycobacterium marinum (strain ATCC BAA-535 / M).